The following is a 477-amino-acid chain: Ribulose bisphosphate carboxylase large chain (477 aa).

Positions 1–2 (MS) are excised as a propeptide. N-acetylproline is present on P3. An N6,N6,N6-trimethyllysine modification is found at K14. Residues N123 and T173 each contribute to the substrate site. The active-site Proton acceptor is the K175. K177 lines the substrate pocket. Positions 201, 203, and 204 each coordinate Mg(2+). Residue K201 is modified to N6-carboxylysine. H294 (proton acceptor) is an active-site residue. Residues R295, H327, and S379 each contribute to the substrate site.

This sequence belongs to the RuBisCO large chain family. Type I subfamily. In terms of assembly, heterohexadecamer of 8 large chains and 8 small chains; disulfide-linked. The disulfide link is formed within the large subunit homodimers. The cofactor is Mg(2+). The disulfide bond which can form in the large chain dimeric partners within the hexadecamer appears to be associated with oxidative stress and protein turnover.

Its subcellular location is the plastid. The enzyme catalyses 2 (2R)-3-phosphoglycerate + 2 H(+) = D-ribulose 1,5-bisphosphate + CO2 + H2O. The catalysed reaction is D-ribulose 1,5-bisphosphate + O2 = 2-phosphoglycolate + (2R)-3-phosphoglycerate + 2 H(+). RuBisCO catalyzes two reactions: the carboxylation of D-ribulose 1,5-bisphosphate, the primary event in carbon dioxide fixation, as well as the oxidative fragmentation of the pentose substrate in the photorespiration process. Both reactions occur simultaneously and in competition at the same active site. The protein is Ribulose bisphosphate carboxylase large chain (rbcL) of Lathraea clandestina (Purple toothwort).